The sequence spans 214 residues: MLKLFNVNFNNMPERKLDEIFSLREITFKDRLDWKVTCIDGKESDQYDDENTNYILGTIDDTIVCSVRFIDMKYPTMITGPFAPYFSDVSLPIDGFIESSRFFVEKALARDMVGNNSSLSTILFLAMVNYARDRGHKGILTVVSRGMFILLKRSGWNITVLNQGESEKNEVIYLLHLGIDNDSQQQLINKILRVHQVEPKTLETWPIIVPGIIK.

This sequence belongs to the autoinducer synthase family.

The catalysed reaction is a fatty acyl-[ACP] + S-adenosyl-L-methionine = an N-acyl-L-homoserine lactone + S-methyl-5'-thioadenosine + holo-[ACP] + H(+). Its function is as follows. Required for the synthesis of autoinducer molecules such as OHHL (N-(3-oxohexanoyl)-L-homoserine lactone), and HHL (N-hexanoyl-L-homoserine lactone). The polypeptide is Acyl-homoserine-lactone synthase (yenI) (Yersinia enterocolitica).